Here is a 162-residue protein sequence, read N- to C-terminus: EF-hand calcium-binding domain-containing protein 11 (162 aa).

EF-hand domains follow at residues 18-53 (SERR…LFGY), 91-126 (LYRN…VAPK), and 127-162 (LPAR…GQSK). Residues Asp140, Asp142, Asp144, His146, and Asp151 each coordinate Ca(2+).

This chain is EF-hand calcium-binding domain-containing protein 11 (Efcab11), found in Mus musculus (Mouse).